Here is a 491-residue protein sequence, read N- to C-terminus: E3 ubiquitin-protein ligase Hakai (491 aa).

Residues 1–61 are disordered; sequence MDHTDNELQG…PAKAPPGDEE (61 aa). The RING-type zinc finger occupies 109–149; it reads CDKCGLPIKIYGRMIPCKHVFCYDCAILHEKKGDKMCPGCS. The segment at 148–206 is HYB domain; that stretch reads CSDPVQRIEQCTRGSLFMCSIVQGCKRTYLSQRDLQAHINHRHMRAGKPVTRASLENVH. A C2H2-type zinc finger spans residues 164–190; sequence FMCSIVQGCKRTYLSQRDLQAHINHRH. Residues S201, S285, and S290 each carry the phosphoserine modification. A disordered region spans residues 255–491; sequence QPHEDIRAPP…DQTRYRPYYQ (237 aa). Pro residues-rich tracts occupy residues 342-359, 372-389, and 399-423; these read APPPPPPPPISHPMPHPP, APPPPMTSAPPPITPPPG, and MNHPPPGPPPPQHGGPPVTAPPPHH. Residues 427–442 are compositionally biased toward polar residues; it reads NSLPQFTEDQGTLSPP. Residues 457-478 show a composition bias toward pro residues; the sequence is PRGPPPPPRLQGPPSQTPLPGP.

This sequence belongs to the Hakai family. In terms of assembly, homodimer. Interacts with tyrosine-phosphorylated SRC substrates. Component of the WMM complex, a N6-methyltransferase complex composed of a catalytic subcomplex, named MAC, and of an associated subcomplex, named MACOM. The MAC subcomplex is composed of METTL3 and METTL14. The MACOM subcomplex is composed of WTAP, ZC3H13, CBLL1/HAKAI, VIRMA, and, in some cases of RBM15 (RBM15 or RBM15B). Also a component of a MACOM-like complex, named WTAP complex, composed of WTAP, ZC3H13, CBLL1, VIRMA, RBM15, BCLAF1 and THRAP3. Phosphorylated on tyrosine residues.

The protein localises to the nucleus speckle. Its subcellular location is the nucleus. It localises to the nucleoplasm. It is found in the cytoplasm. The enzyme catalyses S-ubiquitinyl-[E2 ubiquitin-conjugating enzyme]-L-cysteine + [acceptor protein]-L-lysine = [E2 ubiquitin-conjugating enzyme]-L-cysteine + N(6)-ubiquitinyl-[acceptor protein]-L-lysine.. It functions in the pathway protein modification; protein ubiquitination. Its function is as follows. E3 ubiquitin-protein ligase that mediates ubiquitination of several tyrosine-phosphorylated Src substrates, including CDH1, CTTN and DOK1. Targets CDH1 for endocytosis and degradation. Associated component of the WMM complex, a complex that mediates N6-methyladenosine (m6A) methylation of RNAs, a modification that plays a role in the efficiency of mRNA splicing and RNA processing. Its function in the WMM complex is unknown. This Homo sapiens (Human) protein is E3 ubiquitin-protein ligase Hakai.